Here is a 201-residue protein sequence, read N- to C-terminus: Adenylyl-sulfate kinase (201 aa).

Residue 35-42 coordinates ATP; sequence GLSGSGKS. Catalysis depends on Ser109, which acts as the Phosphoserine intermediate.

The protein belongs to the APS kinase family.

The catalysed reaction is adenosine 5'-phosphosulfate + ATP = 3'-phosphoadenylyl sulfate + ADP + H(+). The protein operates within sulfur metabolism; hydrogen sulfide biosynthesis; sulfite from sulfate: step 2/3. Functionally, catalyzes the synthesis of activated sulfate. This chain is Adenylyl-sulfate kinase, found in Salmonella gallinarum (strain 287/91 / NCTC 13346).